A 345-amino-acid chain; its full sequence is Phosphoribosylformylglycinamidine cyclo-ligase (345 aa).

It belongs to the AIR synthase family.

The protein resides in the cytoplasm. It carries out the reaction 2-formamido-N(1)-(5-O-phospho-beta-D-ribosyl)acetamidine + ATP = 5-amino-1-(5-phospho-beta-D-ribosyl)imidazole + ADP + phosphate + H(+). It participates in purine metabolism; IMP biosynthesis via de novo pathway; 5-amino-1-(5-phospho-D-ribosyl)imidazole from N(2)-formyl-N(1)-(5-phospho-D-ribosyl)glycinamide: step 2/2. In Salmonella choleraesuis (strain SC-B67), this protein is Phosphoribosylformylglycinamidine cyclo-ligase.